The following is a 157-amino-acid chain: Probable succinate transporter subunit YjjB (157 aa).

4 helical membrane-spanning segments follow: residues 15–35 (ILAAIPAVGFAMVFNVPVQAL), 50–70 (MILMTSGLNIEWSTFMASMLV), 87–107 (VFTVAAVIPMFPGISAYTAMI), and 121–141 (LMITLLTNFLTASSIVGALSV).

This sequence belongs to the ThrE exporter (TC 2.A.79) family. The transporter is composed of YjjB and YjjP.

It localises to the cell inner membrane. In terms of biological role, involved in succinate export with YjjP. Both proteins are required for export. The chain is Probable succinate transporter subunit YjjB from Shigella dysenteriae serotype 1 (strain Sd197).